The following is a 520-amino-acid chain: GMP synthase [glutamine-hydrolyzing] (520 aa).

Residues 12-205 enclose the Glutamine amidotransferase type-1 domain; the sequence is KIIVLDYGSQ…AIFICGARGD (194 aa). Catalysis depends on cysteine 89, which acts as the Nucleophile. Active-site residues include histidine 179 and glutamate 181. The region spanning 206–395 is the GMPS ATP-PPase domain; sequence WSMDNFIDMQ…LGMPENIVWR (190 aa). 233 to 239 lines the ATP pocket; that stretch reads SGGVDSS.

Homodimer.

It carries out the reaction XMP + L-glutamine + ATP + H2O = GMP + L-glutamate + AMP + diphosphate + 2 H(+). It participates in purine metabolism; GMP biosynthesis; GMP from XMP (L-Gln route): step 1/1. Catalyzes the synthesis of GMP from XMP. The protein is GMP synthase [glutamine-hydrolyzing] of Streptococcus uberis (strain ATCC BAA-854 / 0140J).